The sequence spans 548 residues: Serine/threonine-protein phosphatase 2A 56 kDa regulatory subunit delta 1 isoform (548 aa).

The span at 1–10 (MKGIKSKMLS) shows a compositional bias: basic residues. Residues 1–75 (MKGIKSKMLS…KKVPIDTTPT (75 aa)) are disordered. A compositionally biased stretch (basic and acidic residues) spans 27–39 (KKSNSHDSSKAPK). Phosphotyrosine is present on Tyr96. Residues Ser99, Ser109, and Ser542 each carry the phosphoserine modification.

Belongs to the phosphatase 2A regulatory subunit B family. As to quaternary structure, PP2A consists of a common heterodimeric core enzyme, composed of a 36 kDa catalytic subunit (subunit C) and a 65 kDa constant regulatory subunit (PR65 or subunit A), that associates with a variety of regulatory subunits. Proteins that associate with the core dimer include three families of regulatory subunits B (the R2/B/PR55/B55, R3/B''/PR72/PR130/PR59 and R5/B'/B56 families), the 48 kDa variable regulatory subunit, viral proteins, and cell signaling molecules.

It localises to the cytoplasm. The protein localises to the nucleus. Its function is as follows. The B regulatory subunit might modulate substrate selectivity and catalytic activity, and might also direct the localization of the catalytic enzyme to a particular subcellular compartment. Has a role in cell shape control and septum formation. The sequence is that of Serine/threonine-protein phosphatase 2A 56 kDa regulatory subunit delta 1 isoform (par1) from Schizosaccharomyces pombe (strain 972 / ATCC 24843) (Fission yeast).